The sequence spans 85 residues: LYR motif-containing protein 5A (85 aa).

It belongs to the complex I LYR family.

The sequence is that of LYR motif-containing protein 5A (lyrm5a) from Danio rerio (Zebrafish).